We begin with the raw amino-acid sequence, 176 residues long: Gamma-crystallin M2 (176 aa).

Beta/gamma crystallin 'Greek key' domains are found at residues 2–40 and 41–83; these read GKVIFYEDRNFQGRHYECSSDCADLSPYFSRCNSIRVEG and GCWV…RIIP. A connecting peptide region spans residues 84 to 88; the sequence is QYRGS. Beta/gamma crystallin 'Greek key' domains are found at residues 89 to 129 and 130 to 172; these read YRMR…HVMD and GYWI…RRIM.

The protein belongs to the beta/gamma-crystallin family. In terms of assembly, monomer.

Its function is as follows. Crystallins are the dominant structural components of the vertebrate eye lens. This chain is Gamma-crystallin M2 (GM2), found in Chiloscyllium indicum (Slender bamboo shark).